The primary structure comprises 94 residues: Aspartyl/glutamyl-tRNA(Asn/Gln) amidotransferase subunit C (94 aa).

It belongs to the GatC family. Heterotrimer of A, B and C subunits.

The enzyme catalyses L-glutamyl-tRNA(Gln) + L-glutamine + ATP + H2O = L-glutaminyl-tRNA(Gln) + L-glutamate + ADP + phosphate + H(+). It catalyses the reaction L-aspartyl-tRNA(Asn) + L-glutamine + ATP + H2O = L-asparaginyl-tRNA(Asn) + L-glutamate + ADP + phosphate + 2 H(+). Allows the formation of correctly charged Asn-tRNA(Asn) or Gln-tRNA(Gln) through the transamidation of misacylated Asp-tRNA(Asn) or Glu-tRNA(Gln) in organisms which lack either or both of asparaginyl-tRNA or glutaminyl-tRNA synthetases. The reaction takes place in the presence of glutamine and ATP through an activated phospho-Asp-tRNA(Asn) or phospho-Glu-tRNA(Gln). The sequence is that of Aspartyl/glutamyl-tRNA(Asn/Gln) amidotransferase subunit C from Hydrogenobaculum sp. (strain Y04AAS1).